The primary structure comprises 62 residues: Small ribosomal subunit protein eS17 (62 aa).

This sequence belongs to the eukaryotic ribosomal protein eS17 family.

The sequence is that of Small ribosomal subunit protein eS17 from Methanoculleus marisnigri (strain ATCC 35101 / DSM 1498 / JR1).